The primary structure comprises 507 residues: Microcystinase C (507 aa).

The N-terminal stretch at 1–21 is a signal peptide; sequence MLDRRTLMGGILSMAGSKATG. Zn(2+) is bound by residues Asp-167, His-169, and His-191.

Belongs to the peptidase M81 family. Zn(2+) is required as a cofactor.

With respect to regulation, inhibited by the metal chelators EDTA and 1,10-phenanthroline. In terms of biological role, involved in peptidolytic degradation of cyclic heptapeptide hepatotoxin microcystin (MC). Cleaves both linear MC and the tetrapeptide degradation product of MC. Cleaves the Adda-Glu peptide bond of linear MC heptapeptides. The chain is Microcystinase C from Sphingomonas sp.